The following is a 276-amino-acid chain: Nickel import system permease protein NikC (276 aa).

Transmembrane regions (helical) follow at residues 10–30 (LIFF…FFVS), 73–93 (LFVT…LGLF), 108–128 (FIDV…ASFF), 186–206 (IIPA…LYIS), and 238–258 (IMLI…NLTG). The ABC transmembrane type-1 domain occupies 69–258 (ARSTLFVTVL…ITILIFNLTG (190 aa)).

Belongs to the binding-protein-dependent transport system permease family. OppBC subfamily. In terms of assembly, the complex is composed of two ATP-binding proteins (NikD and NikE), two transmembrane proteins (NikB and NikC) and a solute-binding protein (NikA).

The protein localises to the cell membrane. Part of the ABC transporter complex NikABCDE (Opp2) involved in nickel import. Probably responsible for the translocation of the substrate across the membrane. The chain is Nickel import system permease protein NikC from Staphylococcus aureus (strain bovine RF122 / ET3-1).